The chain runs to 723 residues: LPS-assembly protein LptD (723 aa).

Positions 1–23 (MNTLKLCLILYACLVLLPVRVMS) are cleaved as a signal peptide.

Belongs to the LptD family. Component of the lipopolysaccharide transport and assembly complex. Interacts with LptE and LptA.

The protein localises to the cell outer membrane. Its function is as follows. Together with LptE, is involved in the assembly of lipopolysaccharide (LPS) at the surface of the outer membrane. This is LPS-assembly protein LptD from Nitrosomonas europaea (strain ATCC 19718 / CIP 103999 / KCTC 2705 / NBRC 14298).